The following is a 73-amino-acid chain: SIFamide-related peptide (73 aa).

The first 23 residues, 1-23, serve as a signal peptide directing secretion; that stretch reads MVSIRLTFALAIVAIIFAFSVDA. At Phe35 the chain carries Phenylalanine amide. The propeptide occupies 39–73; it reads SNTMTDYEFTSRALSAICEVASETCTAWMSRQESN.

As to expression, expressed in brain, the retrocerebral complex and in ventral, thoracic and abdominal ganglia (at protein level).

It is found in the secreted. The protein is SIFamide-related peptide of Camponotus floridanus (Florida carpenter ant).